A 243-amino-acid chain; its full sequence is Vesicle-associated membrane protein-associated protein B (243 aa).

Residue A2 is modified to N-acetylalanine. At 2-218 (AKVEQVLSLE…AALAATGKEE (217 aa)) the chain is on the cytoplasmic side. Positions 7–124 (VLSLEPQHEL…MDSKLRCVFE (118 aa)) constitute an MSP domain. Phosphoserine is present on S146. K147 participates in a covalent cross-link: Glycyl lysine isopeptide (Lys-Gly) (interchain with G-Cter in SUMO1). A phosphoserine mark is found at S156 and S159. Residues 161 to 196 (LDDTEVKKVMEECRRLQGEVQRLREESRQLKEEDGL) adopt a coiled-coil conformation. S206 is subject to Phosphoserine. The chain crosses the membrane as a helical; Anchor for type IV membrane protein span at residues 219–239 (GLSARLLALVVLFFIVGVIIG).

This sequence belongs to the VAMP-associated protein (VAP) (TC 9.B.17) family. In terms of assembly, homodimer, and heterodimer with VAPA. Interacts with VAMP1 and VAMP2. Interacts (via MSP domain) with ZFYVE27. Interacts with RMDN3. Interacts with KIF5A in a ZFYVE27-dependent manner. Interacts (via MSP domain) with STARD3 (via phospho-FFAT motif). Interacts with STARD3NL (via FFAT motif). Interacts with CERT1. Interacts with PLEKHA3 and SACM1L to form a ternary complex. Interacts with VPS13A (via FFAT motif). Interacts with RB1CC1 (via phosphorylated FFAT motif), MIGA2 (via phosphorylated FFAT motif), RMDN3 (via phosphorylated FFAT motif), OSBPL1A (via FFAT motif), KCNB1 (via phosphorylated FFAT motif) and KCNB2 (via phosphorylated FFAT motif). Interacts (via MSP domain) with WDR44 (via FFAT motif); the interactions connect the endoplasmic reticulum (ER) with the endosomal tubule.

It localises to the endoplasmic reticulum membrane. In terms of biological role, endoplasmic reticulum (ER)-anchored protein that mediates the formation of contact sites between the ER and endosomes via interaction with FFAT motif-containing proteins such as STARD3 or WDR44. Interacts with STARD3 in a FFAT motif phosphorylation dependent manner. Via interaction with WDR44 participates in neosynthesized protein export. Participates in the endoplasmic reticulum unfolded protein response (UPR) by inducing ERN1/IRE1 activity. Involved in cellular calcium homeostasis regulation. The protein is Vesicle-associated membrane protein-associated protein B of Mus musculus (Mouse).